A 450-amino-acid chain; its full sequence is Oxygen-independent coproporphyrinogen III oxidase (450 aa).

One can recognise a Radical SAM core domain in the interval 45 to 282 (IPAGGSISLY…RTLILWDGYQ (238 aa)). S-adenosyl-L-methionine is bound at residue Y54. C60 and C64 together coordinate [4Fe-4S] cluster. An S-adenosyl-L-methionine-binding site is contributed by F66. C67 is a binding site for [4Fe-4S] cluster. S-adenosyl-L-methionine contacts are provided by residues G111, 112 to 113 (GT), E144, Q171, R183, D208, A242, and I328.

Belongs to the anaerobic coproporphyrinogen-III oxidase family. Monomer. Requires [4Fe-4S] cluster as cofactor.

It localises to the cytoplasm. It carries out the reaction coproporphyrinogen III + 2 S-adenosyl-L-methionine = protoporphyrinogen IX + 2 5'-deoxyadenosine + 2 L-methionine + 2 CO2. It functions in the pathway porphyrin-containing compound metabolism; protoporphyrin-IX biosynthesis; protoporphyrinogen-IX from coproporphyrinogen-III (AdoMet route): step 1/1. Functionally, involved in the heme and chlorophyll biosynthesis. Catalyzes the anaerobic oxidative decarboxylation of propionate groups of rings A and B of coproporphyrinogen III to yield the vinyl groups in protoporphyrinogen IX. This Cereibacter sphaeroides (strain ATCC 17023 / DSM 158 / JCM 6121 / CCUG 31486 / LMG 2827 / NBRC 12203 / NCIMB 8253 / ATH 2.4.1.) (Rhodobacter sphaeroides) protein is Oxygen-independent coproporphyrinogen III oxidase (hemZ).